We begin with the raw amino-acid sequence, 445 residues long: Argininosuccinate synthase (445 aa).

Residues 17 to 25 and Ala43 contribute to the ATP site; that span reads AFSGGLDTS. L-citrulline is bound at residue Tyr99. The ATP site is built by Gly129 and Thr131. L-aspartate contacts are provided by Thr131, Asn135, and Asp136. Asn135 contributes to the L-citrulline binding site. Residue Asp136 participates in ATP binding. 2 residues coordinate L-citrulline: Arg139 and Ser192. Asp194 lines the ATP pocket. Positions 201, 203, and 280 each coordinate L-citrulline.

The protein belongs to the argininosuccinate synthase family. Type 2 subfamily. Homotetramer.

The protein localises to the cytoplasm. The catalysed reaction is L-citrulline + L-aspartate + ATP = 2-(N(omega)-L-arginino)succinate + AMP + diphosphate + H(+). It participates in amino-acid biosynthesis; L-arginine biosynthesis; L-arginine from L-ornithine and carbamoyl phosphate: step 2/3. The chain is Argininosuccinate synthase (argG) from Burkholderia multivorans (strain ATCC 17616 / 249).